A 666-amino-acid polypeptide reads, in one-letter code: UvrABC system protein B (666 aa).

One can recognise a Helicase ATP-binding domain in the interval 28–171 (NNINQGIQRQ…YLHVGELIEF (144 aa)). Residue 41–48 (GATGTGKT) participates in ATP binding. A Beta-hairpin motif is present at residues 94 to 117 (YFDYYQPEAYKPITDTYIEKDSVT). Residues 436–598 (QIDDLINELM…IIPKTIIKPI (163 aa)) form the Helicase C-terminal domain. The 36-residue stretch at 624 to 659 (NQKIKELKKKMEEAAKKREYEVAAQYRDMIVELEAI) folds into the UVR domain.

It belongs to the UvrB family. As to quaternary structure, forms a heterotetramer with UvrA during the search for lesions. Interacts with UvrC in an incision complex.

Its subcellular location is the cytoplasm. Functionally, the UvrABC repair system catalyzes the recognition and processing of DNA lesions. A damage recognition complex composed of 2 UvrA and 2 UvrB subunits scans DNA for abnormalities. Upon binding of the UvrA(2)B(2) complex to a putative damaged site, the DNA wraps around one UvrB monomer. DNA wrap is dependent on ATP binding by UvrB and probably causes local melting of the DNA helix, facilitating insertion of UvrB beta-hairpin between the DNA strands. Then UvrB probes one DNA strand for the presence of a lesion. If a lesion is found the UvrA subunits dissociate and the UvrB-DNA preincision complex is formed. This complex is subsequently bound by UvrC and the second UvrB is released. If no lesion is found, the DNA wraps around the other UvrB subunit that will check the other stand for damage. This chain is UvrABC system protein B, found in Ureaplasma parvum serovar 3 (strain ATCC 27815 / 27 / NCTC 11736).